A 376-amino-acid polypeptide reads, in one-letter code: N,N'-diacetylbacillosaminyl-diphospho-undecaprenol alpha-1,3-N-acetylgalactosaminyltransferase (376 aa).

Belongs to the glycosyltransferase group 1 family.

It carries out the reaction N,N'-diacetyl-alpha-D-bacillosaminyl-tri-trans,hepta-cis-undecaprenyl diphosphate + UDP-N-acetyl-alpha-D-galactosamine = N-acetyl-alpha-D-galactosaminyl-(1-&gt;3)-N,N'-diacetyl-alpha-D-bacillosaminyl-tri-trans,hepta-cis-undecaprenyl diphosphate + UDP + H(+). It functions in the pathway protein modification; protein glycosylation. Its function is as follows. Adds the first GalNAc residue on to the isoprenoid-linked bacillosamine (2,4-diacetamido-2,4,6-trideoxyglucose) carrier in the N-linked protein glycosylation pathway. Acts first on the undecaprenylpyrophosphate-linked bacillosamine (Und-PP-Bac) substrate to yield the disaccharide. The sequence is that of N,N'-diacetylbacillosaminyl-diphospho-undecaprenol alpha-1,3-N-acetylgalactosaminyltransferase (pglA) from Campylobacter jejuni subsp. jejuni serotype O:2 (strain ATCC 700819 / NCTC 11168).